The primary structure comprises 237 residues: F-box only protein 50 (237 aa).

The region spanning 31-231 is the FBA domain; it reads VFETKPFERN…VTDSSVIVKA (201 aa). Positions 40-82 are disordered; that stretch reads NLLQNPSPYGVNHTVPPPEPHRSGIPPPSDRPPQLEPEGNFSG. The segment covering 64-74 has biased composition (pro residues); that stretch reads IPPPSDRPPQL.

In terms of tissue distribution, expressed in nonspecific cytotoxic cells (NCC).

It localises to the cytoplasm. In terms of biological role, may promote cell proliferation. The chain is F-box only protein 50 (nccrp1) from Danio rerio (Zebrafish).